Reading from the N-terminus, the 790-residue chain is Cadherin-6 (790 aa).

The first 30 residues, 1–30 (MRTYHCFWLLFWAGQPHQSFLTLLSKRTSG), serve as a signal peptide directing secretion. A propeptide spanning residues 31–53 (FPEKEKVLVLSGNSRRDLSRSKR) is cleaved from the precursor. Cadherin domains are found at residues 54 to 159 (SWMW…EPMF), 160 to 268 (TKDV…PPRF), 269 to 383 (PQST…PPVF), 384 to 486 (SRPA…DNAP), and 487 to 608 (EFAM…LIHP). At 54 to 615 (SWMWNQFFLL…IHPTGLSTGA (562 aa)) the chain is on the extracellular side. N-linked (GlcNAc...) asparagine glycans are attached at residues Asn-165 and Asn-255. The tract at residues 261 to 289 (VNDNPPRFPQSTYQFRAPESTPPDSPIGR) is disordered. N-linked (GlcNAc...) asparagine glycosylation is found at Asn-437, Asn-455, and Asn-536. Residues 616–636 (LIAILLCIIILLVTVVLFAAL) form a helical membrane-spanning segment. Topologically, residues 637–790 (RRQRKKEPLI…YGSMDSDKDS (154 aa)) are cytoplasmic.

Its subcellular location is the cell membrane. Functionally, cadherins are calcium-dependent cell adhesion proteins. They preferentially interact with themselves in a homophilic manner in connecting cells; cadherins may thus contribute to the sorting of heterogeneous cell types. The sequence is that of Cadherin-6 (CDH6) from Gallus gallus (Chicken).